The chain runs to 714 residues: Macrophage-expressed gene 1 protein (714 aa).

The N-terminal stretch at 1 to 19 (MNSFMAIALIWMMIACAEA) is a signal peptide. Residues 30-345 (GFQTCKDTLK…TAVRHYYTFN (316 aa)) form the MACPF domain. Residues Cys-34 and Cys-70 are joined by a disulfide bond. Beta stranded transmembrane passes span 113 to 120 (FSINTELS) and 127 to 132 (GKFSTE). N-linked (GlcNAc...) asparagine glycosylation is present at Asn-185. Beta stranded transmembrane passes span 235-244 (TVTASAGIAF) and 248-256 (VNFKVETDH). N-linked (GlcNAc...) asparagine glycosylation is present at Asn-269. Cys-350 and Cys-369 form a disulfide bridge. A glycan (N-linked (GlcNAc...) asparagine) is linked at Asn-375. 5 cysteine pairs are disulfide-bonded: Cys-385/Cys-394, Cys-432/Cys-446, Cys-436/Cys-442, Cys-531/Cys-569, and Cys-554/Cys-574. A P2 region spans residues 410–653 (PSGYTPVHLL…GDGNGMSGGE (244 aa)). Residues 654–674 (AAGVTLGVIIALGIVITLAIY) traverse the membrane as a helical segment. A disordered region spans residues 690–714 (EQESLVGSFATDASPPNGEQDPCPA).

The protein belongs to the MPEG1 family. As to quaternary structure, homooligomer; predominantly forms a homooligomeric arc-shaped pore complex instead of complete rings of 16 subunits. In terms of processing, proteolytically processed in two steps to generate the Macrophage-expressed gene 1 protein, processed form: cleaved by trypsin in proximity of the helical transmembrane domain releases the ectodomain into the lysosomal lumen to orient the pore-forming domain toward the endogenous membranes, and processed by the asparagine endopeptidase (LGMN). Proteolytic processing in antigen-containing vesicles is pH-dependent. Monoubiquitinated in response to bacterial infection; ubiquitination is required for vesicular localization and antibacterial activity and can be blocked by bacterial cell cycle inhibiting factor (cif).

Its subcellular location is the cytoplasmic vesicle membrane. It localises to the cytoplasmic vesicle. The protein resides in the phagosome membrane. With respect to regulation, forms arc- and ring-shaped pre-pores on top of the membrane at neutral to slightly acidic pH conditions and converts to pores upon acidification. Undergoes transition from the pre-pore to the pore in a processive clockwise hand-over-hand process. In the pore state, 2 alpha-helical regions refold into transmembrane hairpins (TMH1 and TMH2) in each protomer that form in the ensemble complex giant beta-barrel transmembrane pores. Its function is as follows. Pore-forming protein involved in both innate and adaptive immunity. Plays a central role in antigen cross-presentation in dendritic cells by forming a pore in antigen-containing compartments, thereby promoting delivery of antigens for cross-presentation. Also involved in innate immune response following bacterial infection; shows antibacterial activity against a wide spectrum of Gram-positive, Gram-negative and acid-fast bacteria. Reduces the viability of the intracytosolic pathogen L.monocytogenes by inhibiting acidification of the phagocytic vacuole of host cells which restricts bacterial translocation from the vacuole to the cytosol. Required for the antibacterial activity of reactive oxygen species and nitric oxide. Functionally, pore-forming protein that plays a central role in antigen cross-presentation in dendritic cells by mediating delivery of antigens for cross-presentation. Dendritic cells bridge innate and adaptive immunity by capturing exogenous antigens on MHC class-I molecules and presenting them to naive CD8(+) T-cells. Acts by forming a pore in antigen-containing compartments, promoting the release of antigens into the cytosol, enabling generation of MHCI:peptide complexes and T-cell priming. This chain is Macrophage-expressed gene 1 protein (Mpeg1), found in Rattus norvegicus (Rat).